The chain runs to 285 residues: 2,3,4,5-tetrahydropyridine-2,6-dicarboxylate N-succinyltransferase (285 aa).

Substrate contacts are provided by arginine 111 and aspartate 148.

The protein belongs to the transferase hexapeptide repeat family. In terms of assembly, homotrimer.

The protein resides in the cytoplasm. It catalyses the reaction (S)-2,3,4,5-tetrahydrodipicolinate + succinyl-CoA + H2O = (S)-2-succinylamino-6-oxoheptanedioate + CoA. It functions in the pathway amino-acid biosynthesis; L-lysine biosynthesis via DAP pathway; LL-2,6-diaminopimelate from (S)-tetrahydrodipicolinate (succinylase route): step 1/3. The chain is 2,3,4,5-tetrahydropyridine-2,6-dicarboxylate N-succinyltransferase from Allorhizobium ampelinum (strain ATCC BAA-846 / DSM 112012 / S4) (Agrobacterium vitis (strain S4)).